Consider the following 233-residue polypeptide: Large ribosomal subunit protein uL1 (233 aa).

The protein belongs to the universal ribosomal protein uL1 family. In terms of assembly, part of the 50S ribosomal subunit.

Its function is as follows. Binds directly to 23S rRNA. The L1 stalk is quite mobile in the ribosome, and is involved in E site tRNA release. Protein L1 is also a translational repressor protein, it controls the translation of the L11 operon by binding to its mRNA. The chain is Large ribosomal subunit protein uL1 from Geotalea daltonii (strain DSM 22248 / JCM 15807 / FRC-32) (Geobacter daltonii).